The primary structure comprises 439 residues: Probable tRNA pseudouridine synthase D (439 aa).

Asp-87 acts as the Nucleophile in catalysis. The TRUD domain occupies Gly-166–Leu-391.

It belongs to the pseudouridine synthase TruD family.

The enzyme catalyses uridine(13) in tRNA = pseudouridine(13) in tRNA. Could be responsible for synthesis of pseudouridine from uracil-13 in transfer RNAs. In Methanococcoides burtonii (strain DSM 6242 / NBRC 107633 / OCM 468 / ACE-M), this protein is Probable tRNA pseudouridine synthase D.